Consider the following 433-residue polypeptide: Protein FAM98B (433 aa).

Positions 303–433 (GRVPDRGGRP…GGGGGGYRRY (131 aa)) are disordered. Basic and acidic residues predominate over residues 305–314 (VPDRGGRPNE). The segment covering 331–433 (GGGGRGGWGG…GGGGGGYRRY (103 aa)) has biased composition (gly residues).

It belongs to the FAM98 family. In terms of assembly, homodimer. Component of the tRNA-splicing ligase complex. Interacts with FAM98A. In terms of tissue distribution, expressed strongly in colorectal cancer tissues compared to wild-type colon samples (at protein level). Expressed strongly in colorectal cancer tissues compared to wild-type colon samples.

It is found in the nucleus. The protein localises to the cytoplasm. Functionally, positively stimulates PRMT1-induced protein arginine dimethylated arginine methylation. This chain is Protein FAM98B (FAM98B), found in Homo sapiens (Human).